The following is a 448-amino-acid chain: N-succinylarginine dihydrolase (448 aa).

Substrate-binding positions include 20–29 (AGLLFGNEAS), N111, and 138–139 (HR). Residue E175 is part of the active site. R213 lines the substrate pocket. H249 is a catalytic residue. Residues D251 and N360 each coordinate substrate. Catalysis depends on C366, which acts as the Nucleophile.

It belongs to the succinylarginine dihydrolase family. In terms of assembly, homodimer.

It carries out the reaction N(2)-succinyl-L-arginine + 2 H2O + 2 H(+) = N(2)-succinyl-L-ornithine + 2 NH4(+) + CO2. The protein operates within amino-acid degradation; L-arginine degradation via AST pathway; L-glutamate and succinate from L-arginine: step 2/5. Functionally, catalyzes the hydrolysis of N(2)-succinylarginine into N(2)-succinylornithine, ammonia and CO(2). The polypeptide is N-succinylarginine dihydrolase (Shigella dysenteriae serotype 1 (strain Sd197)).